Consider the following 87-residue polypeptide: Phosphoribosyl-ATP pyrophosphatase (87 aa).

This sequence belongs to the PRA-PH family.

The protein resides in the cytoplasm. The enzyme catalyses 1-(5-phospho-beta-D-ribosyl)-ATP + H2O = 1-(5-phospho-beta-D-ribosyl)-5'-AMP + diphosphate + H(+). It participates in amino-acid biosynthesis; L-histidine biosynthesis; L-histidine from 5-phospho-alpha-D-ribose 1-diphosphate: step 2/9. The polypeptide is Phosphoribosyl-ATP pyrophosphatase (Nocardioides sp. (strain ATCC BAA-499 / JS614)).